A 716-amino-acid chain; its full sequence is ATP-dependent DNA helicase DinG (716 aa).

The Helicase ATP-binding domain occupies 17-294 (ALQEQIPDFI…TCMEQFRPKT (278 aa)). 54-61 (APTGVGKT) contacts ATP. Residue C120 participates in [4Fe-4S] cluster binding. Positions 131–134 (EPTQ) match the DEAH box motif. [4Fe-4S] cluster-binding residues include C194, C199, and C205. Residues 248 to 251 (DEGH) carry the DEAH box motif. The 182-residue stretch at 517 to 698 (HIAEMAAFFR…VFPIEQPEVP (182 aa)) folds into the Helicase C-terminal domain.

This sequence belongs to the helicase family. DinG subfamily. Type 1 sub-subfamily. The cofactor is [4Fe-4S] cluster.

The catalysed reaction is Couples ATP hydrolysis with the unwinding of duplex DNA at the replication fork by translocating in the 5'-3' direction. This creates two antiparallel DNA single strands (ssDNA). The leading ssDNA polymer is the template for DNA polymerase III holoenzyme which synthesizes a continuous strand.. The enzyme catalyses ATP + H2O = ADP + phosphate + H(+). DNA-dependent ATPase and 5'-3' DNA helicase. Unwinds D-loops, R-loops, forked DNA and G-quadruplex DNA. The protein is ATP-dependent DNA helicase DinG of Escherichia coli O6:H1 (strain CFT073 / ATCC 700928 / UPEC).